Reading from the N-terminus, the 394-residue chain is Probable fimbrial assembly protein FimD, serogroup H1 (394 aa).

In Dichelobacter nodosus (Bacteroides nodosus), this protein is Probable fimbrial assembly protein FimD, serogroup H1 (fimD).